A 303-amino-acid chain; its full sequence is METVRIATRKSPLALWQSEHVADRLRQAHPGLHVELVPMSTRGDEVLDRSLAAIGGKGLFLKELELAMLRGEADCAVHSLKDVPMELDPPFALPAMLTRHDPADGFVSNLYASLDALPIGARVGTSSLRRQAQLRALRPDLELLDLRGNVNTRLAKLDNGGYDAIVLAVAGLERLGLGERIVARLQPPQWLPAPAQGAVAVECDGGNARLMALFAPLDDAATRACVEAERAMNRALHGSCHVPVAAIAQWQGDDLHLQGLVGSASDGRAVRAEAVGPANDPEGLGQRVAKLLLDDGAGELLNV.

C240 carries the S-(dipyrrolylmethanemethyl)cysteine modification.

It belongs to the HMBS family. Monomer. Requires dipyrromethane as cofactor.

The catalysed reaction is 4 porphobilinogen + H2O = hydroxymethylbilane + 4 NH4(+). It functions in the pathway porphyrin-containing compound metabolism; protoporphyrin-IX biosynthesis; coproporphyrinogen-III from 5-aminolevulinate: step 2/4. In terms of biological role, tetrapolymerization of the monopyrrole PBG into the hydroxymethylbilane pre-uroporphyrinogen in several discrete steps. The polypeptide is Porphobilinogen deaminase (Stenotrophomonas maltophilia (strain K279a)).